Consider the following 149-residue polypeptide: YbbR-like domain-containing protein in def 5'region (149 aa).

Residues 1-68 (IPVEVLAQGA…LRPNRVRVVE (68 aa)) form the YbbR-like domain.

The sequence is that of YbbR-like domain-containing protein in def 5'region from Thermus thermophilus.